A 407-amino-acid chain; its full sequence is 12S rRNA N(4)-cytidine methyltransferase METTL15 (407 aa).

The disordered stretch occupies residues 44 to 63; sequence EAQEETDQTGIQELHRSQDR. Residues 100–102, aspartate 119, phenylalanine 146, aspartate 169, and glutamine 176 contribute to the S-adenosyl-L-methionine site; that span reads GGH. A Phosphoserine modification is found at serine 358. The segment at 386-407 is disordered; it reads EDEDVQDNPRGRSAKLRAAIKL. Positions 397–407 are enriched in basic residues; the sequence is RSAKLRAAIKL.

This sequence belongs to the methyltransferase superfamily. RsmH family.

Its subcellular location is the mitochondrion matrix. The catalysed reaction is cytidine(839) in 12S rRNA + S-adenosyl-L-methionine = N(4)-methylcytidine(839) in 12S rRNA + S-adenosyl-L-homocysteine + H(+). N4-methylcytidine (m4C) methyltransferase responsible for the methylation of position C839 in mitochondrial 12S rRNA. Involved in the stabilization of 12S rRNA folding, therefore facilitating the assembly of the mitochondrial small ribosomal subunits. This Bos taurus (Bovine) protein is 12S rRNA N(4)-cytidine methyltransferase METTL15 (METTL15).